The following is a 147-amino-acid chain: Large ribosomal subunit protein uL13 (147 aa).

Positions 127-147 (GPEHPHSAQQPKVLEIQGAAR) are disordered.

Belongs to the universal ribosomal protein uL13 family. In terms of assembly, part of the 50S ribosomal subunit.

In terms of biological role, this protein is one of the early assembly proteins of the 50S ribosomal subunit, although it is not seen to bind rRNA by itself. It is important during the early stages of 50S assembly. In Verminephrobacter eiseniae (strain EF01-2), this protein is Large ribosomal subunit protein uL13.